Consider the following 462-residue polypeptide: MSYITVIDDKLYSSLRKLVGYSPLYLFNDKGDFVEVMKNSEFRFLIPSGYFSNSNVPLYGLTFSYGRNWMKDRQKIILPELYPIQRRVIEEIILQFSRKCKEKRPLYTTLHLACGFGKTVTASYLIGTHKKNAVVSVPNKLILKQWENSISSLKVSYYVSYEGVSKLLKVLTSKSFSILVVVDKHFSNKEFCELVYENYDVFILDEAHIYNLMNESIMTSFLCYYPPRICYFLTATPRQQNAVYCNSIINFIKFSPLQKILYVIRELYNEYTNPSIRAHVSQLQTTANKYHLYTEKALAEDIHRNKTIVDKIIETFKTNQGNRILVITKLRNHMIIIYNDLRKVLSDKVYLGDAQKKSTTDMIKELRTIDNFILVSTLHYAGTGLDIPNLDSLFICNTVMNSMQSEQVMGRICRDTGSSPTRSIYLFINTSIKEIKSLVGVFTQRFAQQATKLGFREVSQMA.

One can recognise a Helicase ATP-binding domain in the interval 99 to 255 (KCKEKRPLYT…NSIINFIKFS (157 aa)). 112-119 (LACGFGKT) contacts ATP. The DEAH box signature appears at 205-208 (DEAH). Residues 308–459 (IVDKIIETFK…ATKLGFREVS (152 aa)) form the Helicase C-terminal domain.

The protein belongs to the helicase family. Poxviruses subfamily. In terms of assembly, interacts with G2. Might be part of a transcription complex composed at least of G2, A18, and H5.

The protein resides in the virion. DNA helicase which seems to act as a postreplicative transcription termination factor. Involved in ATP-dependent release of nascent RNA. Forms a stable complex with single-stranded DNA, and to a lesser extent RNA. The chain is Transcript termination protein A18 from Vertebrata (FPV).